The chain runs to 125 residues: Large ribosomal subunit protein bL12 (125 aa).

The protein belongs to the bacterial ribosomal protein bL12 family. As to quaternary structure, homodimer. Part of the ribosomal stalk of the 50S ribosomal subunit. Forms a multimeric L10(L12)X complex, where L10 forms an elongated spine to which 2 to 4 L12 dimers bind in a sequential fashion. Binds GTP-bound translation factors.

Functionally, forms part of the ribosomal stalk which helps the ribosome interact with GTP-bound translation factors. Is thus essential for accurate translation. The chain is Large ribosomal subunit protein bL12 from Gluconobacter oxydans (strain 621H) (Gluconobacter suboxydans).